We begin with the raw amino-acid sequence, 70 residues long: Large ribosomal subunit protein bL31 (70 aa).

4 residues coordinate Zn(2+): cysteine 16, cysteine 18, cysteine 37, and cysteine 40.

This sequence belongs to the bacterial ribosomal protein bL31 family. Type A subfamily. In terms of assembly, part of the 50S ribosomal subunit. The cofactor is Zn(2+).

Binds the 23S rRNA. The sequence is that of Large ribosomal subunit protein bL31 from Haemophilus ducreyi (strain 35000HP / ATCC 700724).